A 266-amino-acid polypeptide reads, in one-letter code: Undecaprenyl-diphosphatase (266 aa).

8 consecutive transmembrane segments (helical) span residues 1 to 21 (MDTFQVIILALIQGLTEFLPI), 39 to 59 (QGLSFDVAVNTGSLFAVVIYF), 87 to 107 (WWIILATLPAVFFGFIAKDFI), 111 to 131 (LRSAGVIAVTTIVFGLLLWWA), 149 to 169 (ALLIGFAQALALIPGTSRSGA), 183 to 203 (AAARFSFLMSVPVSLGAAILV), 218 to 238 (ALTLGTVISFVAAYLCIHYFL), and 246 to 266 (MTPFVIYRLILGAVLCGFIFL).

It belongs to the UppP family.

Its subcellular location is the cell inner membrane. It carries out the reaction di-trans,octa-cis-undecaprenyl diphosphate + H2O = di-trans,octa-cis-undecaprenyl phosphate + phosphate + H(+). Functionally, catalyzes the dephosphorylation of undecaprenyl diphosphate (UPP). Confers resistance to bacitracin. This is Undecaprenyl-diphosphatase from Shewanella sp. (strain MR-4).